The following is a 189-amino-acid chain: GTP cyclohydrolase 1 (189 aa).

Zn(2+)-binding residues include Cys78, His81, and Cys150.

Belongs to the GTP cyclohydrolase I family. Homomer.

It carries out the reaction GTP + H2O = 7,8-dihydroneopterin 3'-triphosphate + formate + H(+). It functions in the pathway cofactor biosynthesis; 7,8-dihydroneopterin triphosphate biosynthesis; 7,8-dihydroneopterin triphosphate from GTP: step 1/1. This chain is GTP cyclohydrolase 1, found in Listeria monocytogenes serotype 4a (strain HCC23).